Here is a 331-residue protein sequence, read N- to C-terminus: Ketol-acid reductoisomerase (NADP(+)) (331 aa).

Residues 2-182 enclose the KARI N-terminal Rossmann domain; the sequence is ARMYYDADAN…GGTRAGILET (181 aa). NADP(+) contacts are provided by residues 25–28, Ser51, Ser53, and 83–86; these read YGSQ and DEVQ. The active site involves His108. Residue Gly134 coordinates NADP(+). In terms of domain architecture, KARI C-terminal knotted spans 183-328; sequence SFREETETDL…KDLRAMFSWL (146 aa). Mg(2+) is bound by residues Asp191, Glu195, Glu227, and Glu231. Ser252 is a binding site for substrate.

This sequence belongs to the ketol-acid reductoisomerase family. Mg(2+) is required as a cofactor.

The catalysed reaction is (2R)-2,3-dihydroxy-3-methylbutanoate + NADP(+) = (2S)-2-acetolactate + NADPH + H(+). It catalyses the reaction (2R,3R)-2,3-dihydroxy-3-methylpentanoate + NADP(+) = (S)-2-ethyl-2-hydroxy-3-oxobutanoate + NADPH + H(+). It participates in amino-acid biosynthesis; L-isoleucine biosynthesis; L-isoleucine from 2-oxobutanoate: step 2/4. It functions in the pathway amino-acid biosynthesis; L-valine biosynthesis; L-valine from pyruvate: step 2/4. Functionally, involved in the biosynthesis of branched-chain amino acids (BCAA). Catalyzes an alkyl-migration followed by a ketol-acid reduction of (S)-2-acetolactate (S2AL) to yield (R)-2,3-dihydroxy-isovalerate. In the isomerase reaction, S2AL is rearranged via a Mg-dependent methyl migration to produce 3-hydroxy-3-methyl-2-ketobutyrate (HMKB). In the reductase reaction, this 2-ketoacid undergoes a metal-dependent reduction by NADPH to yield (R)-2,3-dihydroxy-isovalerate. The chain is Ketol-acid reductoisomerase (NADP(+)) from Crocosphaera subtropica (strain ATCC 51142 / BH68) (Cyanothece sp. (strain ATCC 51142)).